We begin with the raw amino-acid sequence, 285 residues long: Protoheme IX farnesyltransferase (285 aa).

The next 9 helical transmembrane spans lie at 13–33 (LGKLGVVSLLDLAAVAGAFLA), 40–60 (LLPIIPMFIGGTLASMGAMII), 89–109 (EAIIVGSLLAILGTALGFIDN), 110–130 (ILTAFFIALGVVIYIFVYTIL), 137–157 (LNIVIGGFAGSAAAWAGYTSL), 165–185 (GFLLGFLIFMWTPGHFWSLAL), 194–214 (AHYPMLPAVVGITTSARAIAI), 218–238 (LMIPIVLLLGYYINLIALIAF), and 265–285 (FIFSNIYLMLILLIMIIVKLI).

It belongs to the UbiA prenyltransferase family. Protoheme IX farnesyltransferase subfamily.

Its subcellular location is the cell membrane. The enzyme catalyses heme b + (2E,6E)-farnesyl diphosphate + H2O = Fe(II)-heme o + diphosphate. It participates in porphyrin-containing compound metabolism; heme O biosynthesis; heme O from protoheme: step 1/1. In terms of biological role, converts heme B (protoheme IX) to heme O by substitution of the vinyl group on carbon 2 of heme B porphyrin ring with a hydroxyethyl farnesyl side group. In Saccharolobus islandicus (strain Y.G.57.14 / Yellowstone #1) (Sulfolobus islandicus), this protein is Protoheme IX farnesyltransferase.